We begin with the raw amino-acid sequence, 115 residues long: GPPPAIGREVDCSNYKGKGSQIACPRLHQPICGTDHKTYSNECMFCALTLNKKFEVRKLQDTACDIECTEYSDMCTMDYRPLCGSDGKNYSNKCSFCNAVKKSRGTIFLAKHGEC.

2 Kazal-like domains span residues 6–66 (IGRE…ACDI) and 67–115 (ECTE…HGEC). 6 disulfide bridges follow: cysteine 12-cysteine 46, cysteine 24-cysteine 43, cysteine 32-cysteine 64, cysteine 68-cysteine 97, cysteine 75-cysteine 94, and cysteine 83-cysteine 115.

The protein resides in the secreted. Its function is as follows. This inhibitor is composed of two homologous actively inhibiting halves: one which inhibits trypsin, the other which inhibits elastase. The sequence is that of Double-headed protease inhibitor, submandibular gland from Canis lupus familiaris (Dog).